Consider the following 811-residue polypeptide: Ent-13-epi-manoyl oxide synthase KSL2, chloroplastic (811 aa).

The N-terminal 49 residues, 1 to 49, are a transit peptide targeting the chloroplast; it reads MALPLSTCLLFHPKESRSRRFCFSPASAASLKSGLHSATSAKIASMPTC. 4 residues coordinate Mg(2+): Asp-550, Asp-554, Asn-694, and Glu-702. The short motif at 550-554 is the DDXXD motif element; it reads DDFFD.

The protein belongs to the terpene synthase family. It depends on Mg(2+) as a cofactor.

It is found in the plastid. It localises to the chloroplast. The enzyme catalyses ent-8alpha-hydroxylabd-13-en-15-yl diphosphate = ent-13-epi-manoyl oxide + diphosphate. It functions in the pathway secondary metabolite biosynthesis; terpenoid biosynthesis. Its function is as follows. Involved in diterpenoid biosynthesis. Catalyzes the conversion of ent-8alpha-hydroxylabd-13-en-15-yl diphosphate to ent-13-epi-manoyl oxide. The polypeptide is Ent-13-epi-manoyl oxide synthase KSL2, chloroplastic (Salvia miltiorrhiza (Chinese sage)).